A 501-amino-acid polypeptide reads, in one-letter code: Glycerol kinase (501 aa).

Threonine 11 lines the ADP pocket. ATP is bound by residues threonine 11, threonine 12, and serine 13. A sn-glycerol 3-phosphate-binding site is contributed by threonine 11. Arginine 15 is a binding site for ADP. Residues arginine 81, glutamate 82, tyrosine 133, and aspartate 242 each contribute to the sn-glycerol 3-phosphate site. Glycerol-binding residues include arginine 81, glutamate 82, tyrosine 133, aspartate 242, and glutamine 243. Threonine 264 and glycine 307 together coordinate ADP. Residues threonine 264, glycine 307, glutamine 311, and glycine 409 each contribute to the ATP site. ADP-binding residues include glycine 409 and asparagine 413.

The protein belongs to the FGGY kinase family.

The enzyme catalyses glycerol + ATP = sn-glycerol 3-phosphate + ADP + H(+). It functions in the pathway polyol metabolism; glycerol degradation via glycerol kinase pathway; sn-glycerol 3-phosphate from glycerol: step 1/1. Inhibited by fructose 1,6-bisphosphate (FBP). Functionally, key enzyme in the regulation of glycerol uptake and metabolism. Catalyzes the phosphorylation of glycerol to yield sn-glycerol 3-phosphate. The polypeptide is Glycerol kinase (Borreliella afzelii (strain PKo) (Borrelia afzelii)).